Consider the following 264-residue polypeptide: Tryptophan synthase alpha chain (264 aa).

Residues E49 and D60 each act as proton acceptor in the active site.

Belongs to the TrpA family. Tetramer of two alpha and two beta chains.

It catalyses the reaction (1S,2R)-1-C-(indol-3-yl)glycerol 3-phosphate + L-serine = D-glyceraldehyde 3-phosphate + L-tryptophan + H2O. Its pathway is amino-acid biosynthesis; L-tryptophan biosynthesis; L-tryptophan from chorismate: step 5/5. Functionally, the alpha subunit is responsible for the aldol cleavage of indoleglycerol phosphate to indole and glyceraldehyde 3-phosphate. The sequence is that of Tryptophan synthase alpha chain from Geotalea daltonii (strain DSM 22248 / JCM 15807 / FRC-32) (Geobacter daltonii).